A 156-amino-acid polypeptide reads, in one-letter code: Acanthoscurrin-1 (156 aa).

The signal sequence occupies residues 1–23; it reads MAFRMKLVVCIVLLSTLAVMSSA. K155 bears the Lysine amide mark.

Expressed in hemocytes and secreted into the plasma following bacterial immune challenge.

The protein resides in the secreted. Antimicrobial protein. Strong activity against the Gram-negative bacterium E.coli SBS363 and yeast C.albicans. No detectable activity against the Gram-positive bacterium M.luteus. The sequence is that of Acanthoscurrin-1 from Acanthoscurria gomesiana (Tarantula spider).